The sequence spans 456 residues: Enolase (456 aa).

A (2R)-2-phosphoglycerate-binding site is contributed by Gln164. The active-site Proton donor is the Glu207. Residues Asp244, Glu287, and Asp314 each contribute to the Mg(2+) site. (2R)-2-phosphoglycerate is bound by residues Lys339, Arg368, Ser369, and Lys390. The active-site Proton acceptor is Lys339.

The protein belongs to the enolase family. Component of the RNA degradosome, a multiprotein complex involved in RNA processing and mRNA degradation. Requires Mg(2+) as cofactor.

It is found in the cytoplasm. The protein resides in the secreted. Its subcellular location is the cell surface. The catalysed reaction is (2R)-2-phosphoglycerate = phosphoenolpyruvate + H2O. It functions in the pathway carbohydrate degradation; glycolysis; pyruvate from D-glyceraldehyde 3-phosphate: step 4/5. Functionally, catalyzes the reversible conversion of 2-phosphoglycerate (2-PG) into phosphoenolpyruvate (PEP). It is essential for the degradation of carbohydrates via glycolysis. This is Enolase from Francisella tularensis subsp. holarctica (strain LVS).